A 367-amino-acid polypeptide reads, in one-letter code: 3-dehydroquinate synthase (367 aa).

Residues 69–74 (DGESHK), 103–107 (GVIGD), 127–128 (TT), Lys-140, Lys-149, and 167–170 (TLAT) contribute to the NAD(+) site. Zn(2+)-binding residues include Glu-182, His-245, and His-262.

This sequence belongs to the sugar phosphate cyclases superfamily. Dehydroquinate synthase family. The cofactor is Co(2+). Zn(2+) serves as cofactor. NAD(+) is required as a cofactor.

The protein localises to the cytoplasm. It carries out the reaction 7-phospho-2-dehydro-3-deoxy-D-arabino-heptonate = 3-dehydroquinate + phosphate. The protein operates within metabolic intermediate biosynthesis; chorismate biosynthesis; chorismate from D-erythrose 4-phosphate and phosphoenolpyruvate: step 2/7. In terms of biological role, catalyzes the conversion of 3-deoxy-D-arabino-heptulosonate 7-phosphate (DAHP) to dehydroquinate (DHQ). The sequence is that of 3-dehydroquinate synthase from Stutzerimonas stutzeri (strain A1501) (Pseudomonas stutzeri).